Reading from the N-terminus, the 611-residue chain is Protein KINASE OF THE OUTER CHLOROPLAST MEMBRANE 1 (611 aa).

At 1 to 555 (MASKIIAGKP…LEDFHWAVRP (555 aa)) the chain is on the cytoplasmic side. Positions 39 to 306 (LKLRHRIGRG…TDILLVLKSL (268 aa)) constitute a Protein kinase domain. Residues 45–53 (IGRGPFGDV) and lysine 74 each bind ATP. Residues 556–572 (LLIAMGLLTAMKLGICV) form a helical membrane-spanning segment. The Chloroplast intermembrane portion of the chain corresponds to 573–611 (RKKIGRSKDGKQRDGSTGQGDCKIPDGKGSDKSKWLVFF). The interval 579–606 (SKDGKQRDGSTGQGDCKIPDGKGSDKSK) is disordered. Residues 595 to 606 (KIPDGKGSDKSK) are compositionally biased toward basic and acidic residues.

This sequence belongs to the protein kinase superfamily. Ser/Thr protein kinase family. Associates with the TOC complex containing, at least, translocons at the chloroplast envelope (e.g. TOCs and TICs such as TOC159, TOC75, TOC33 and TIC56).

It is found in the plastid. The protein localises to the chloroplast outer membrane. It catalyses the reaction L-seryl-[protein] + ATP = O-phospho-L-seryl-[protein] + ADP + H(+). The catalysed reaction is L-threonyl-[protein] + ATP = O-phospho-L-threonyl-[protein] + ADP + H(+). Functionally, serine/threonine protein kinase acting as a regulatory component of the plastid protein import machinery by phosphorylating import receptors (e.g. the A-domain of TOC159, TOC120 and TOC132). Supports preprotein import and contributes to efficient chloroplast biogenesis, thus being required for survival during de-etiolation. In Arabidopsis thaliana (Mouse-ear cress), this protein is Protein KINASE OF THE OUTER CHLOROPLAST MEMBRANE 1.